The primary structure comprises 492 residues: MQTSIPNWLMQRAFLTPERIAVYDGQGKKTFMELHESVMKRARQLANTGVRKGDIVAIFMKNSVAMIECIHALHYIGAIVLLQNTRLTSHELAWQLKDSGAVYVIADDELADRIEGNIRVITMSELSALPEENVEFQQYYHFDDIATIMYTSGTTGKPKGVLQTYENHWWSAIGSALNLGLNENDCWLAAVPFFHISGLSIMMRSVIYGMSMYVMRAFDAKKANELIIGGKVTIMSVVSAMLQKMIADLGERRYPETFRCMLLGGGPAPKPLLEVCKAKGIPVYQTYGMTETASQIATLAPEYSLTKLGSAGKPLFPSQLRIEKDGQVARPYEPGEIVVKGPNVTKGYLHRPDATAKAIRGGWFYTGDIGYIDEDGFLYVLDRRSDLIISGGENVYPAEIEAVLLSHEAVEEAGVTGIDDETWGQVPCAFVKRKRGYSVTVEQLKQFCQAHLAKYKIPKQIYFVDELPRNASQKLLRHQLKQLIPNNENGAL.

It belongs to the ATP-dependent AMP-binding enzyme family. MenE subfamily.

The catalysed reaction is 2-succinylbenzoate + ATP + CoA = 2-succinylbenzoyl-CoA + AMP + diphosphate. The protein operates within quinol/quinone metabolism; 1,4-dihydroxy-2-naphthoate biosynthesis; 1,4-dihydroxy-2-naphthoate from chorismate: step 5/7. It participates in quinol/quinone metabolism; menaquinone biosynthesis. Functionally, converts 2-succinylbenzoate (OSB) to 2-succinylbenzoyl-CoA (OSB-CoA). This chain is 2-succinylbenzoate--CoA ligase, found in Geobacillus sp. (strain WCH70).